Consider the following 186-residue polypeptide: Adrenodoxin, mitochondrial (186 aa).

The N-terminal 58 residues, 1–58 (MAARLLRVASAALGDTAGRWRLLARPRAGAGGLRGSRGPGLGGGAVATRTLSVSGRAQ), are a transit peptide targeting the mitochondrion. Residue S61 is modified to Phosphoserine. K64 is subject to N6-acetyllysine; alternate. Residue K64 is modified to N6-succinyllysine; alternate. The 2Fe-2S ferredoxin-type domain occupies 65-169 (ITVHFINRDG…NMTVRVPDAV (105 aa)). Positions 104, 110, 113, and 150 each coordinate [2Fe-2S] cluster. At K156 the chain carries N6-succinyllysine. Position 175 is a phosphoserine (S175).

Belongs to the adrenodoxin/putidaredoxin family. As to quaternary structure, interacts with CYP11A1. Requires [2Fe-2S] cluster as cofactor. As to expression, detected in adrenal cortex and corpus luteum (at protein level).

The protein localises to the mitochondrion matrix. Its function is as follows. Essential for the synthesis of various steroid hormones. Participates in the reduction of mitochondrial cytochrome P450 for steroidogenesis. Transfers electrons from adrenodoxin reductase to CYP11A1, a cytochrome P450 that catalyzes cholesterol side-chain cleavage to produce pregnenolone, the precursor of most steroid hormones. Does not form a ternary complex with adrenodoxin reductase and CYP11A1 but shuttles between the two enzymes to transfer electrons. This is Adrenodoxin, mitochondrial (FDX1) from Bos taurus (Bovine).